Consider the following 798-residue polypeptide: Protocadherin beta-14 (798 aa).

Positions 1–26 are cleaved as a signal peptide; the sequence is MEIRGALDLRKRQVLIFLVLLGLSRA. Over 27 to 686 the chain is Extracellular; the sequence is GTESAHYSVA…APAQAQADSL (660 aa). Cadherin domains are found at residues 35-133, 138-242, 247-347, 352-451, and 456-561; these read VAEE…SPTF, ILIK…APEF, YEVQ…PPEV, ITKR…APAF, and YTLF…SPFV. The cysteines at positions 96 and 102 are disulfide-linked. An N-linked (GlcNAc...) asparagine glycan is attached at Asn-169. 3 N-linked (GlcNAc...) asparagine glycosylation sites follow: Asn-359, Asn-418, and Asn-436. A glycan (N-linked (GlcNAc...) asparagine) is linked at Asn-567. One can recognise a Cadherin 6 domain in the interval 568 to 671; it reads GSAPCTELVP…LVDGFSQPYL (104 aa). The chain crosses the membrane as a helical span at residues 687–711; the sequence is TVYLVVALASVSSLFLFSVLLFVAV. Over 712 to 798 the chain is Cytoplasmic; it reads RLCRRSRAAS…FRNSFGLNIQ (87 aa).

The protein localises to the cell membrane. Its function is as follows. Potential calcium-dependent cell-adhesion protein. May be involved in the establishment and maintenance of specific neuronal connections in the brain. The polypeptide is Protocadherin beta-14 (PCDHB14) (Pan troglodytes (Chimpanzee)).